Here is a 108-residue protein sequence, read N- to C-terminus: C-C motif chemokine 19 (108 aa).

Residues 1 to 25 (MAPRVTPLLAFSLLVLWTFPAPTLG) form the signal peptide. 2 disulfide bridges follow: C33–C59 and C34–C75. Residue N100 is glycosylated (N-linked (GlcNAc...) asparagine).

The protein belongs to the intercrine beta (chemokine CC) family. In terms of assembly, interacts with TNFAIP6 (via Link domain). As to expression, highly expressed by dendritic cells in mesenteric and peripheral lymph nodes. Significant expression in spleen (T cell zone or periarteriolar lymphatic sheath) and Peyer patches. Low expression in thymus.

It is found in the secreted. In terms of biological role, strongly chemotactic for naive (L-selectinhi) CD4 T-cells and for CD8 T-cells and weakly attractive for resting B-cells and memory (L-selectinlo) CD4 T-cells. May play a role in promoting encounters between recirculating T-cells and dendritic cells and in the migration of activated B-cells into the T-zone of secondary lymphoid tissues. Binds to chemokine receptor CCR7. Binds to atypical chemokine receptor ACKR4 and mediates the recruitment of beta-arrestin (ARRB1/2) to ACKR4. The protein is C-C motif chemokine 19 (Ccl19) of Mus musculus (Mouse).